Consider the following 278-residue polypeptide: HTH-type transcriptional activator RhaS (278 aa).

Residues 174–272 enclose the HTH araC/xylS-type domain; sequence NQLLAWLEDH…DWSPRDIRQG (99 aa). DNA-binding regions (H-T-H motif) lie at residues 191–212 and 239–262; these read EEVAAQFSLSLRTLHRQLKQQT and VTDIAFRCGFGDSNHFSTLFRREF.

In terms of assembly, binds DNA as a dimer.

It localises to the cytoplasm. Its function is as follows. Activates expression of the rhaBAD and rhaT operons. This Klebsiella pneumoniae (strain 342) protein is HTH-type transcriptional activator RhaS.